A 1203-amino-acid polypeptide reads, in one-letter code: Metabotropic glutamate receptor 5 (1203 aa).

A signal peptide spans 1 to 18; sequence MVLLLILSVLLLKEDVRG. Residues 19–579 lie on the Extracellular side of the membrane; the sequence is SAQSSERRVV…QYLRWGDPEP (561 aa). Cysteines 57 and 99 form a disulfide. Tyrosine 64 lines the L-glutamate pocket. N-linked (GlcNAc...) asparagine glycosylation occurs at asparagine 88. L-glutamate-binding positions include serine 151 and 172–174; that span reads SAT. Asparagine 209 carries N-linked (GlcNAc...) asparagine glycosylation. Tyrosine 222 contacts L-glutamate. Intrachain disulfides connect cysteine 240/cysteine 529, cysteine 275/cysteine 277, cysteine 364/cysteine 380, cysteine 418/cysteine 425, cysteine 510/cysteine 530, cysteine 514/cysteine 533, cysteine 536/cysteine 548, and cysteine 551/cysteine 564. Aspartate 304 is an L-glutamate binding site. N-linked (GlcNAc...) asparagine glycans are attached at residues asparagine 377 and asparagine 381. Position 395 (lysine 395) interacts with L-glutamate. An N-linked (GlcNAc...) asparagine glycan is attached at asparagine 444. A helical membrane pass occupies residues 580-602; that stretch reads IAAVVFACLGLLATLFVTVIFII. Residues 603–612 lie on the Cytoplasmic side of the membrane; sequence YRDTPVVKSS. A helical transmembrane segment spans residues 613-635; that stretch reads SRELCYIILAGICLGYLCTFCLI. The Extracellular portion of the chain corresponds to 636–643; it reads AKPKQIYC. Cysteine 643 and cysteine 732 are disulfide-bonded. A helical transmembrane segment spans residues 644 to 666; sequence YLQRIGIGLSPAMSYSALVTKTN. Over 667 to 692 the chain is Cytoplasmic; that stretch reads RIARILAGSKKKICTKKPRFMSACAQ. Residues 693–713 traverse the membrane as a helical segment; it reads LVIAFILICIQLGIIVALFIM. Residues 714–736 are Extracellular-facing; sequence EPPDIMHDYPSIREVYLICNTTN. Asparagine 733 carries N-linked (GlcNAc...) asparagine glycosylation. Residues 737–758 form a helical membrane-spanning segment; sequence LGVVTPLGYNGLLILSCTFYAF. Over 759–771 the chain is Cytoplasmic; sequence KTRNVPANFNEAK. Residues 772-794 form a helical membrane-spanning segment; that stretch reads YIAFTMYTTCIIWLAFVPIYFGS. Over 795-797 the chain is Extracellular; the sequence is NYK. A helical transmembrane segment spans residues 798 to 819; the sequence is IITMCFSVSLSATVALGCMFVP. Residues 820-1203 lie on the Cytoplasmic side of the membrane; sequence KVYIILAKPE…RDYTQSSSSL (384 aa). Serine 860 is subject to Phosphoserine. Arginine 868 carries the omega-N-methylarginine modification. Disordered stretches follow at residues 892–1054 and 1120–1182; these read FTPK…GSLM and TGGA…ALCI. The segment covering 905–920 has biased composition (polar residues); the sequence is TMSSSNGKSVTWAQNE. Arginine 924 is subject to Omega-N-methylarginine. Gly residues predominate over residues 960 to 977; sequence QGAGAGGGSGPGAAGAGS. Residues 1007-1019 show a composition bias toward low complexity; that stretch reads PAAARPRSPSPIS. A phosphoserine mark is found at serine 1014 and serine 1016. 2 stretches are compositionally biased toward polar residues: residues 1039–1054 and 1165–1176; these read HSET…GSLM and DSGSTTPNSPVS.

The protein belongs to the G-protein coupled receptor 3 family. As to quaternary structure, the PPXXF motif binds HOMER1, HOMER2 and HOMER3. Interacts with RYR1, RYR2, ITPR1, SHANK1 and SHANK3. Interacts with SIAH1 and TAMALIN. Interacts with NCDN. Interacts with NECAB2. Interacts with CAMK2A.

The protein localises to the cell membrane. G-protein coupled receptor for glutamate. Ligand binding causes a conformation change that triggers signaling via guanine nucleotide-binding proteins (G proteins) and modulates the activity of down-stream effectors. Signaling activates a phosphatidylinositol-calcium second messenger system and generates a calcium-activated chloride current. Plays an important role in the regulation of synaptic plasticity and the modulation of the neural network activity. The sequence is that of Metabotropic glutamate receptor 5 (Grm5) from Mus musculus (Mouse).